The chain runs to 410 residues: WD repeat and FYVE domain-containing protein 1 (410 aa).

WD repeat units lie at residues 22–61 (GHQD…QYWP), 66–105 (TMAS…NKMN), 112–150 (AHQN…NMLG), 153–192 (FFSS…CSVI), 197–236 (GHEG…GRTL), and 240–279 (GHHD…EEAP). The segment at 281-352 (WLESDSCQKC…VCDSCYDSIK (72 aa)) adopts an FYVE-type zinc-finger fold. Zn(2+) contacts are provided by cysteine 287, cysteine 290, cysteine 314, cysteine 317, cysteine 322, cysteine 325, cysteine 344, and cysteine 347. Residues 364-403 (EGKHNISHMSMDVARGLMVTCGTDRVVKIWDMTPVVGCSL) form a WD 7 repeat. At serine 408 the chain carries Phosphoserine.

Binds PtdIns3P in vitro with high specificity over other phosphoinositides. Interacts (via WD repeat 2) with tyrosine-phosphorylated TLR3 (via TIR domain) in response to poly(I:C). Interacts with TLR4 in response to LPS. Interacts with TICAM1 in response to poly(I:C).

Its subcellular location is the early endosome. In terms of biological role, positively regulates TLR3- and TLR4-mediated signaling pathways by bridging the interaction between TLR3 or TLR4 and TICAM1. Promotes TLR3/4 ligand-induced activation of transcription factors IRF3 and NF-kappa-B, as well as the production of IFN-beta and inflammatory cytokines. The chain is WD repeat and FYVE domain-containing protein 1 (WDFY1) from Bos taurus (Bovine).